The primary structure comprises 296 residues: 4-hydroxy-tetrahydrodipicolinate synthase (296 aa).

Pyruvate is bound at residue Thr45. Tyr133 acts as the Proton donor/acceptor in catalysis. Lys161 acts as the Schiff-base intermediate with substrate in catalysis. Ile203 serves as a coordination point for pyruvate.

Belongs to the DapA family. Homotetramer; dimer of dimers.

The protein resides in the cytoplasm. The catalysed reaction is L-aspartate 4-semialdehyde + pyruvate = (2S,4S)-4-hydroxy-2,3,4,5-tetrahydrodipicolinate + H2O + H(+). It functions in the pathway amino-acid biosynthesis; L-lysine biosynthesis via DAP pathway; (S)-tetrahydrodipicolinate from L-aspartate: step 3/4. Its function is as follows. Catalyzes the condensation of (S)-aspartate-beta-semialdehyde [(S)-ASA] and pyruvate to 4-hydroxy-tetrahydrodipicolinate (HTPA). The protein is 4-hydroxy-tetrahydrodipicolinate synthase of Idiomarina loihiensis (strain ATCC BAA-735 / DSM 15497 / L2-TR).